Reading from the N-terminus, the 638-residue chain is Threonine--tRNA ligase (638 aa).

One can recognise a TGS domain in the interval 1–61; it reads MPVITLPDGS…SVDGKLQIIT (61 aa). The catalytic stretch occupies residues 243–534; that stretch reads DHRKIGKTQD…LTEEYAGFFP (292 aa). Residues C334, H385, and H511 each contribute to the Zn(2+) site.

It belongs to the class-II aminoacyl-tRNA synthetase family. In terms of assembly, homodimer. It depends on Zn(2+) as a cofactor.

The protein localises to the cytoplasm. It catalyses the reaction tRNA(Thr) + L-threonine + ATP = L-threonyl-tRNA(Thr) + AMP + diphosphate + H(+). Catalyzes the attachment of threonine to tRNA(Thr) in a two-step reaction: L-threonine is first activated by ATP to form Thr-AMP and then transferred to the acceptor end of tRNA(Thr). Also edits incorrectly charged L-seryl-tRNA(Thr). This is Threonine--tRNA ligase from Hamiltonella defensa subsp. Acyrthosiphon pisum (strain 5AT).